The primary structure comprises 130 residues: Small ribosomal subunit protein uS9 (130 aa).

The protein belongs to the universal ribosomal protein uS9 family.

The chain is Small ribosomal subunit protein uS9 from Aeromonas hydrophila subsp. hydrophila (strain ATCC 7966 / DSM 30187 / BCRC 13018 / CCUG 14551 / JCM 1027 / KCTC 2358 / NCIMB 9240 / NCTC 8049).